Consider the following 237-residue polypeptide: Glucosamine-6-phosphate deaminase (237 aa).

The Proton acceptor; for enolization step role is filled by Asp-67. Catalysis depends on Asn-136, which acts as the For ring-opening step. The Proton acceptor; for ring-opening step role is filled by His-138. Glu-143 serves as the catalytic For ring-opening step.

Belongs to the glucosamine/galactosamine-6-phosphate isomerase family. NagB subfamily.

The enzyme catalyses alpha-D-glucosamine 6-phosphate + H2O = beta-D-fructose 6-phosphate + NH4(+). Its pathway is amino-sugar metabolism; N-acetylneuraminate degradation; D-fructose 6-phosphate from N-acetylneuraminate: step 5/5. In terms of biological role, catalyzes the reversible isomerization-deamination of glucosamine 6-phosphate (GlcN6P) to form fructose 6-phosphate (Fru6P) and ammonium ion. This chain is Glucosamine-6-phosphate deaminase, found in Lysinibacillus sphaericus (strain C3-41).